Here is a 65-residue protein sequence, read N- to C-terminus: Large ribosomal subunit protein bL35 (65 aa).

A disordered region spans residues 1–22 (MPKIKTVRGAAKRFKKTGSGGF). Over residues 10 to 22 (AAKRFKKTGSGGF) the composition is skewed to basic residues.

The protein belongs to the bacterial ribosomal protein bL35 family.

The protein is Large ribosomal subunit protein bL35 of Serratia proteamaculans (strain 568).